Consider the following 377-residue polypeptide: D-alanine--D-alanine ligase (377 aa).

One can recognise an ATP-grasp domain in the interval 140–349 (KELLTVNGIR…NAKLVDMLID (210 aa)). 170-225 (VAELGNIVFVKAANQGSSVGISRVTNAEEYTEALSDSFQYDYKVLIEEAVNGAREL) provides a ligand contact to ATP. Residues D303, E316, and N318 each contribute to the Mg(2+) site.

This sequence belongs to the D-alanine--D-alanine ligase family. Mg(2+) serves as cofactor. Requires Mn(2+) as cofactor.

It localises to the cytoplasm. It carries out the reaction 2 D-alanine + ATP = D-alanyl-D-alanine + ADP + phosphate + H(+). It participates in cell wall biogenesis; peptidoglycan biosynthesis. Functionally, cell wall formation. The polypeptide is D-alanine--D-alanine ligase (Leuconostoc mesenteroides).